Here is a 385-residue protein sequence, read N- to C-terminus: Outer membrane protein assembly factor BamB (385 aa).

Positions 1–20 (MRKVLKKAALCTFGFSMLFG) are cleaved as a signal peptide. Cys21 carries N-palmitoyl cysteine lipidation. Residue Cys21 is the site of S-diacylglycerol cysteine attachment.

The protein belongs to the BamB family. Part of the Bam complex.

Its subcellular location is the cell outer membrane. Part of the outer membrane protein assembly complex, which is involved in assembly and insertion of beta-barrel proteins into the outer membrane. The protein is Outer membrane protein assembly factor BamB of Aliivibrio fischeri (strain ATCC 700601 / ES114) (Vibrio fischeri).